The primary structure comprises 104 residues: DNA-directed RNA polymerase subunit omega (104 aa).

This sequence belongs to the RNA polymerase subunit omega family. In terms of assembly, the RNAP catalytic core consists of 2 alpha, 1 beta, 1 beta' and 1 omega subunit. When a sigma factor is associated with the core the holoenzyme is formed, which can initiate transcription.

It carries out the reaction RNA(n) + a ribonucleoside 5'-triphosphate = RNA(n+1) + diphosphate. Functionally, promotes RNA polymerase assembly. Latches the N- and C-terminal regions of the beta' subunit thereby facilitating its interaction with the beta and alpha subunits. The protein is DNA-directed RNA polymerase subunit omega of Streptococcus suis (strain 05ZYH33).